A 185-amino-acid polypeptide reads, in one-letter code: MAGRLSFDMNEEACVYHVKDKHRDRKRIKKFLCGMDSLNKTTNVSEKVIDGFIEMDIDIEVENGRVTPITADEYIEDIAAMDDRFEVLYWLIIIGGDANRWRELRRECINHYNKVKVCNKMVNEYEYGFTIIESDDDEQGISGGWPKTSSSYRKDRWKLQNILTKERPGLTALFIFMMRLAGDYY.

This is an uncharacterized protein from Magallana gigas (Pacific oyster).